A 361-amino-acid chain; its full sequence is MASPDEDGRPSLPNPWDAILEAVKHQLPSLDSDSSASDCEDEELFIFQRNQTVLIPDLSEELADDPAGAWVTSSGSPPGLAAVPVESAMEPWGEWNAWPRPKESAPLEGRAPSKSSSLLRMSAETPPRQDDDAGGTLNTSASQSPRQGPQGEATRSPQEAGLQTEPLGAASQAQEGSDAASRKALRRERRKMIEKDILHKVTWDGRNPACPDASRGKEKACDAVEVPSEGPPGCLPVLSLQELEEWDLDQVLLSLTGREEDRGDGAPGAAWWAAGRLQGQDHTEPSTQDRLMERLSLLCARQSRETCRAQPGYGTARERVGSSSSSGHLGRRPLGLSCPPARVLSVRRLRPLEIRPGPALG.

2 disordered regions span residues 65–191 and 309–334; these read DPAG…ERRK and AQPG…RRPL. The span at 136–157 shows a compositional bias: polar residues; sequence TLNTSASQSPRQGPQGEATRSP. 2 positions are modified to phosphoserine: Ser142 and Ser144. Residues 321 to 334 show a composition bias toward low complexity; sequence GSSSSSGHLGRRPL.

Its subcellular location is the dynein axonemal particle. It is found in the cytoplasm. Functionally, in cyliated cells, dynein axonemal particle-specific protein required for deployment of ODA to the axoneme. Interacts with outer dynein arm (ODA) subunits. The sequence is that of Dynein axonemal assembly factor 8 (DNAAF8) from Bos taurus (Bovine).